The following is a 393-amino-acid chain: Formate-dependent phosphoribosylglycinamide formyltransferase (393 aa).

Residues 22–23 (EL) and Glu82 each bind N(1)-(5-phospho-beta-D-ribosyl)glycinamide. ATP contacts are provided by residues Arg114, Lys155, 160 to 165 (SSGHGQ), 195 to 198 (EGFV), and Glu203. The ATP-grasp domain occupies 119 to 308 (RLAAEKLKLP…EFALHARAIL (190 aa)). Residues Glu267 and Glu279 each contribute to the Mg(2+) site. N(1)-(5-phospho-beta-D-ribosyl)glycinamide-binding positions include Asp286, Lys356, and 363–364 (RR).

Belongs to the PurK/PurT family. In terms of assembly, homodimer.

It carries out the reaction N(1)-(5-phospho-beta-D-ribosyl)glycinamide + formate + ATP = N(2)-formyl-N(1)-(5-phospho-beta-D-ribosyl)glycinamide + ADP + phosphate + H(+). It functions in the pathway purine metabolism; IMP biosynthesis via de novo pathway; N(2)-formyl-N(1)-(5-phospho-D-ribosyl)glycinamide from N(1)-(5-phospho-D-ribosyl)glycinamide (formate route): step 1/1. Involved in the de novo purine biosynthesis. Catalyzes the transfer of formate to 5-phospho-ribosyl-glycinamide (GAR), producing 5-phospho-ribosyl-N-formylglycinamide (FGAR). Formate is provided by PurU via hydrolysis of 10-formyl-tetrahydrofolate. In Histophilus somni (strain 129Pt) (Haemophilus somnus), this protein is Formate-dependent phosphoribosylglycinamide formyltransferase.